A 378-amino-acid chain; its full sequence is Protein RecA (378 aa).

Residue 79-86 (GPESSGKT) coordinates ATP.

It belongs to the RecA family.

The protein resides in the cytoplasm. Functionally, can catalyze the hydrolysis of ATP in the presence of single-stranded DNA, the ATP-dependent uptake of single-stranded DNA by duplex DNA, and the ATP-dependent hybridization of homologous single-stranded DNAs. It interacts with LexA causing its activation and leading to its autocatalytic cleavage. The polypeptide is Protein RecA (Streptococcus pyogenes serotype M2 (strain MGAS10270)).